We begin with the raw amino-acid sequence, 312 residues long: Gamma-soluble NSF attachment protein (312 aa).

The disordered stretch occupies residues 281-312 (KKKSPATPQAKPDGAAGMAAEEEEDEYSGGLC). A Phosphoserine modification is found at Ser-284. At Thr-287 the chain carries Phosphothreonine. The span at 300-312 (AEEEEDEYSGGLC) shows a compositional bias: acidic residues. Ser-308 is subject to Phosphoserine.

Belongs to the SNAP family. As to quaternary structure, interacts with RAB11FIP5. Interacts with VTI1A. Abundantly expressed in the heart, liver and kidneys with lower expression in the brain, spleen, lung, muscle and testes.

Its subcellular location is the membrane. The protein localises to the golgi apparatus. In terms of biological role, required for vesicular transport between the endoplasmic reticulum and the Golgi apparatus. The chain is Gamma-soluble NSF attachment protein from Mus musculus (Mouse).